The chain runs to 132 residues: UPF0299 membrane protein KPN78578_25390 (132 aa).

The next 4 helical transmembrane spans lie at 5 to 25 (LTII…LYAG), 38 to 60 (GSII…PQWV), 66 to 86 (ILIR…MQYW), and 93 to 113 (LGPV…VVSW).

Belongs to the UPF0299 family.

The protein localises to the cell inner membrane. This chain is UPF0299 membrane protein KPN78578_25390, found in Klebsiella pneumoniae subsp. pneumoniae (strain ATCC 700721 / MGH 78578).